A 416-amino-acid polypeptide reads, in one-letter code: Phosphoglycerate kinase (416 aa).

Substrate contacts are provided by residues 28-30 (DMN), R44, 65-68 (HQSR), R122, and R162. Residues E337 and 362 to 365 (GGHI) contribute to the ATP site.

Belongs to the phosphoglycerate kinase family. Monomer.

Its subcellular location is the cytoplasm. The catalysed reaction is (2R)-3-phosphoglycerate + ATP = (2R)-3-phospho-glyceroyl phosphate + ADP. It participates in carbohydrate degradation; glycolysis; pyruvate from D-glyceraldehyde 3-phosphate: step 2/5. This is Phosphoglycerate kinase from Methanosarcina mazei (strain ATCC BAA-159 / DSM 3647 / Goe1 / Go1 / JCM 11833 / OCM 88) (Methanosarcina frisia).